A 369-amino-acid chain; its full sequence is UDP-N-acetylglucosamine--N-acetylmuramyl-(pentapeptide) pyrophosphoryl-undecaprenol N-acetylglucosamine transferase (369 aa).

UDP-N-acetyl-alpha-D-glucosamine contacts are provided by residues T10–G12, N124, R166, S196, I251, and Q296.

This sequence belongs to the glycosyltransferase 28 family. MurG subfamily.

It is found in the cell membrane. The catalysed reaction is di-trans,octa-cis-undecaprenyl diphospho-N-acetyl-alpha-D-muramoyl-L-alanyl-D-glutamyl-meso-2,6-diaminopimeloyl-D-alanyl-D-alanine + UDP-N-acetyl-alpha-D-glucosamine = di-trans,octa-cis-undecaprenyl diphospho-[N-acetyl-alpha-D-glucosaminyl-(1-&gt;4)]-N-acetyl-alpha-D-muramoyl-L-alanyl-D-glutamyl-meso-2,6-diaminopimeloyl-D-alanyl-D-alanine + UDP + H(+). It participates in cell wall biogenesis; peptidoglycan biosynthesis. Cell wall formation. Catalyzes the transfer of a GlcNAc subunit on undecaprenyl-pyrophosphoryl-MurNAc-pentapeptide (lipid intermediate I) to form undecaprenyl-pyrophosphoryl-MurNAc-(pentapeptide)GlcNAc (lipid intermediate II). The protein is UDP-N-acetylglucosamine--N-acetylmuramyl-(pentapeptide) pyrophosphoryl-undecaprenol N-acetylglucosamine transferase of Acetivibrio thermocellus (strain ATCC 27405 / DSM 1237 / JCM 9322 / NBRC 103400 / NCIMB 10682 / NRRL B-4536 / VPI 7372) (Clostridium thermocellum).